Consider the following 514-residue polypeptide: ATP synthase subunit alpha (514 aa).

An ATP-binding site is contributed by 170–177; that stretch reads GDRQIGKT.

It belongs to the ATPase alpha/beta chains family. F-type ATPases have 2 components, CF(1) - the catalytic core - and CF(0) - the membrane proton channel. CF(1) has five subunits: alpha(3), beta(3), gamma(1), delta(1), epsilon(1). CF(0) has three main subunits: a(1), b(2) and c(9-12). The alpha and beta chains form an alternating ring which encloses part of the gamma chain. CF(1) is attached to CF(0) by a central stalk formed by the gamma and epsilon chains, while a peripheral stalk is formed by the delta and b chains.

It is found in the cell inner membrane. The enzyme catalyses ATP + H2O + 4 H(+)(in) = ADP + phosphate + 5 H(+)(out). Functionally, produces ATP from ADP in the presence of a proton gradient across the membrane. The alpha chain is a regulatory subunit. This is ATP synthase subunit alpha from Pseudomonas putida (strain W619).